The primary structure comprises 546 residues: Cation/calcium exchanger 5 (546 aa).

13 helical membrane-spanning segments follow: residues 13 to 33 (ALCLTLISILIFFFLTTTTIP), 88 to 108 (NLFFSIPILSLLILLHFYILI), 134 to 154 (AVTLLALGNGAPDVFASVAAL), 163 to 183 (FGAILSAGTFVSAFVVGFVAI), 194 to 214 (SFVRDVLFYLIAALFLFYVYL), 218 to 238 (IFVWQAIGFVGFYIFFVGFVF), 323 to 343 (SANIVFCPFALLYTCNSFVQL), 356 to 376 (LPLWLVVLFMTSSLAFLHFTV), 388 to 408 (VIVVAFIMSVFWISTIAGELL), 423 to 445 (ALLGLTVLAWGNSVGDLVADVAV), 455 to 475 (MAGCFAGPMFNMLVGLGSALV), 492 to 512 (VGIVIAFVFLLLSLMGSLLVI), and 522 to 542 (FWGICLVGLYVAFTFVSLIIA).

It belongs to the Ca(2+):cation antiporter (CaCA) (TC 2.A.19) family. Cation/calcium exchanger (CCX) subfamily.

The protein localises to the cell membrane. In terms of biological role, membrane-localized H(+)-dependent K(+) and Na(+) transporter. The sequence is that of Cation/calcium exchanger 5 (CCX5) from Arabidopsis thaliana (Mouse-ear cress).